The following is a 339-amino-acid chain: Diguanylate cyclase VdcA (339 aa).

Positions 206–339 constitute a GGDEF domain; that stretch reads QQVSLIMLDI…NLGRNRVMPL (134 aa). Aspartate 214 is a binding site for Mg(2+). Substrate is bound by residues asparagine 222 and aspartate 231. Glutamate 257 contacts Mg(2+). Glutamate 257 (proton acceptor) is an active-site residue.

Mg(2+) is required as a cofactor.

It catalyses the reaction 2 GTP = 3',3'-c-di-GMP + 2 diphosphate. It functions in the pathway purine metabolism; 3',5'-cyclic di-GMP biosynthesis. In terms of biological role, diguanylate cyclase (DGC) that catalyzes the synthesis of cyclic diguanylate (c-di-GMP) via the condensation of 2 GTP molecules. Is involved in the modulation of intracellular c-di-GMP levels. Cyclic-di-GMP is a second messenger which positively regulates biofilm formation and negatively regulates virulence in V.cholerae, and is proposed to play an important role in the transition from persistence in the environment to survival in the host. Overexpression of vdcA results in increased biofilm formation, and reduced motility and virulence. In Vibrio cholerae serotype O1 (strain ATCC 39315 / El Tor Inaba N16961), this protein is Diguanylate cyclase VdcA (vdcA).